We begin with the raw amino-acid sequence, 906 residues long: MLSILKKLFGTANDRTVKKLFSEITKINSLEPAIQKLSDEELKNKTVEFKEKLKNGATLDDIVYEAFAVVREAARRVCGMRHFDVQLIGGLILHRGMITEMRTGEGKTLVATLPAYLNALTGKGVHVVTVNDYLASRDSASMGKIYNFLGLSVGCIVAGMPDEAKRAAYNADITHATNNELGFDYLRDNMKYSLQERVLRPFNFAIIDEVDSILIDEARTPLVISGPVNDNSELYGKIDKIVRMLNTSDFEKDEKLKTINLTETGITHIESLLSKEHLIKPDTGLYDFENLTLVHYVNQALRAHNMFTVDVDYLVREGKVMIIDEFTGRVMEGRRYSEGLHQALEAKENVKIQNENQTLASITFQNYFRNYPKLSGMTGTAMTEAPELKDIYNLDVVAVPTHNKVTRLDLDDEIYGSKKEKYDAILKLIKDCYDRGQPILVGTISIEKSEELSSVLNKEKIPHKVLNAKFHEQEAFIIAQAGRFKAVTIATNMAGRGTDIMLGGNPEMLIEQLDEDHNYETKAAEIKAQISEEKKQVIEAGGLFVIGTERHESRRIDNQLRGRSGRQGDPGKTKFFLSLDDDLMRIFASDRISGVLRTLGLKDGEAIHHPMISRSLEKAQQKVEGHNYEMRKNLLRFDDVMNDQRKIIYEQRTEIIKSKDSHGFLNSTTEELAKKIVLTFMPVGSYREDWDIENLSVELHRVFSMKFDHNLVSKNDVTEEEITKIVIQTAHDIYKSKEEAYSSELMHNAVKYILLTTLDQVWKDHLYSLDHLRQGISLRAYAQKDPLSEYKREAFNLFEQMLNNLKELFIQTVYHFHIDLKHIQKEDVSLEHKKLQKNMRESREDPAFSKYNAGSSLETDLKPVVSRVDPKDRNPDDPTSWGRVSRNELCPCGSGKKYKYCHGANE.

ATP is bound by residues glutamine 86, 104–108 (GEGKT), and aspartate 499. The span at 834–847 (KLQKNMRESREDPA) shows a compositional bias: basic and acidic residues. A disordered region spans residues 834-887 (KLQKNMRESREDPAFSKYNAGSSLETDLKPVVSRVDPKDRNPDDPTSWGRVSRN). Zn(2+)-binding residues include cysteine 890, cysteine 892, cysteine 901, and histidine 902.

Belongs to the SecA family. Monomer and homodimer. Part of the essential Sec protein translocation apparatus which comprises SecA, SecYEG and auxiliary proteins SecDF-YajC and YidC. Zn(2+) serves as cofactor.

It is found in the cell inner membrane. The protein localises to the cytoplasm. The enzyme catalyses ATP + H2O + cellular proteinSide 1 = ADP + phosphate + cellular proteinSide 2.. Its function is as follows. Part of the Sec protein translocase complex. Interacts with the SecYEG preprotein conducting channel. Has a central role in coupling the hydrolysis of ATP to the transfer of proteins into and across the cell membrane, serving both as a receptor for the preprotein-SecB complex and as an ATP-driven molecular motor driving the stepwise translocation of polypeptide chains across the membrane. In Rickettsia felis (strain ATCC VR-1525 / URRWXCal2) (Rickettsia azadi), this protein is Protein translocase subunit SecA.